The following is a 184-amino-acid chain: Oocyte-secreted protein 4A (184 aa).

The N-terminal stretch at 1 to 19 (MKISCVLGKLLMLFELIHG) is a signal peptide. A glycan (N-linked (GlcNAc...) asparagine) is linked at N128.

This sequence belongs to the PLAC1 family.

Its subcellular location is the secreted. This is Oocyte-secreted protein 4A from Homo sapiens (Human).